We begin with the raw amino-acid sequence, 130 residues long: MYEHESCGVRISVSPDYLEDESTPEEGRFVWAYTIEIENTGKQPVQLIARKWMITDANGRTEHVQGMGVIGEQPVIEPGGRFRYTSGAPLPTPSGFMSGSYEMRRGDGESFAATIPDFSLDRPSDRLWLH.

Residues 3–127 (EHESCGVRIS…FSLDRPSDRL (125 aa)) form the ApaG domain.

The polypeptide is Protein ApaG (Maricaulis maris (strain MCS10) (Caulobacter maris)).